The following is a 211-amino-acid chain: Large ribosomal subunit protein uL3 (211 aa).

Glutamine 150 is modified (N5-methylglutamine).

It belongs to the universal ribosomal protein uL3 family. Part of the 50S ribosomal subunit. Forms a cluster with proteins L14 and L19. In terms of processing, methylated by PrmB.

One of the primary rRNA binding proteins, it binds directly near the 3'-end of the 23S rRNA, where it nucleates assembly of the 50S subunit. This is Large ribosomal subunit protein uL3 from Pseudomonas savastanoi pv. phaseolicola (strain 1448A / Race 6) (Pseudomonas syringae pv. phaseolicola (strain 1448A / Race 6)).